We begin with the raw amino-acid sequence, 87 residues long: Phosphoribosyl-ATP pyrophosphatase (87 aa).

The protein belongs to the PRA-PH family.

The protein localises to the cytoplasm. The catalysed reaction is 1-(5-phospho-beta-D-ribosyl)-ATP + H2O = 1-(5-phospho-beta-D-ribosyl)-5'-AMP + diphosphate + H(+). The protein operates within amino-acid biosynthesis; L-histidine biosynthesis; L-histidine from 5-phospho-alpha-D-ribose 1-diphosphate: step 2/9. The protein is Phosphoribosyl-ATP pyrophosphatase of Nocardioides sp. (strain ATCC BAA-499 / JS614).